Consider the following 164-residue polypeptide: Biotin carboxyl carrier protein of acetyl-CoA carboxylase (164 aa).

The Biotinyl-binding domain maps to 86–162 (GDFIVSPLVG…QFGSKLFRIV (77 aa)). The residue at position 128 (K128) is an N6-biotinyllysine.

In terms of assembly, homodimer.

It participates in lipid metabolism; fatty acid biosynthesis. Functionally, this protein is a component of the acetyl coenzyme A carboxylase complex; first, biotin carboxylase catalyzes the carboxylation of the carrier protein and then the transcarboxylase transfers the carboxyl group to form malonyl-CoA. The chain is Biotin carboxyl carrier protein of acetyl-CoA carboxylase (accB) from Chlamydia trachomatis serovar D (strain ATCC VR-885 / DSM 19411 / UW-3/Cx).